Reading from the N-terminus, the 203-residue chain is Adenosylcobalamin/alpha-ribazole phosphatase (203 aa).

His-8 acts as the Tele-phosphohistidine intermediate in catalysis. Glu-81 serves as the catalytic Proton donor/acceptor.

Belongs to the phosphoglycerate mutase family.

It catalyses the reaction adenosylcob(III)alamin 5'-phosphate + H2O = adenosylcob(III)alamin + phosphate. The enzyme catalyses alpha-ribazole 5'-phosphate + H2O = alpha-ribazole + phosphate. It functions in the pathway nucleoside biosynthesis; alpha-ribazole biosynthesis; alpha-ribazole from 5,6-dimethylbenzimidazole: step 2/2. Catalyzes the conversion of adenosylcobalamin 5'-phosphate to adenosylcobalamin (vitamin B12); involved in the assembly of the nucleotide loop of cobalamin. Also catalyzes the hydrolysis of the phospho group from alpha-ribazole 5'-phosphate to form alpha-ribazole. The chain is Adenosylcobalamin/alpha-ribazole phosphatase (cobC) from Escherichia coli (strain K12).